The primary structure comprises 486 residues: Glutamyl-tRNA(Gln) amidotransferase subunit A (486 aa).

Active-site charge relay system residues include lysine 75 and serine 150. The active-site Acyl-ester intermediate is serine 174.

Belongs to the amidase family. GatA subfamily. Heterotrimer of A, B and C subunits.

It catalyses the reaction L-glutamyl-tRNA(Gln) + L-glutamine + ATP + H2O = L-glutaminyl-tRNA(Gln) + L-glutamate + ADP + phosphate + H(+). Allows the formation of correctly charged Gln-tRNA(Gln) through the transamidation of misacylated Glu-tRNA(Gln) in organisms which lack glutaminyl-tRNA synthetase. The reaction takes place in the presence of glutamine and ATP through an activated gamma-phospho-Glu-tRNA(Gln). The chain is Glutamyl-tRNA(Gln) amidotransferase subunit A from Nostoc sp. (strain PCC 7120 / SAG 25.82 / UTEX 2576).